Consider the following 356-residue polypeptide: Thrombopoietin (356 aa).

The N-terminal stretch at 1–21 (MELTDLLLAAMLLAVARLTLS) is a signal peptide. Cystine bridges form between Cys28/Cys172 and Cys50/Cys106. Asn197, Asn206, Asn235, Asn249, Asn256, Asn336, and Asn351 each carry an N-linked (GlcNAc...) asparagine glycan. Positions 291 to 356 (GGLPPSPSLA…PHPRNLSQET (66 aa)) are disordered. Over residues 330 to 339 (PSTTMPNSTA) the composition is skewed to polar residues.

It belongs to the EPO/TPO family. Found mainly in the liver, kidney and skeletal muscle.

The protein localises to the secreted. In terms of biological role, lineage-specific cytokine affecting the proliferation and maturation of megakaryocytes from their committed progenitor cells. It acts at a late stage of megakaryocyte development. It may be the major physiological regulator of circulating platelets. The polypeptide is Thrombopoietin (Thpo) (Mus musculus (Mouse)).